The chain runs to 286 residues: 2-hydroxy-6-oxo-6-phenylhexa-2,4-dienoate hydrolase (286 aa).

Substrate is bound by residues 42–43 (GG), Asn51, Asn111, Ser180, and Arg190. His265 (proton acceptor) is an active-site residue. Trp266 serves as a coordination point for substrate.

Belongs to the AB hydrolase superfamily. BphD family. Homodimer.

It carries out the reaction 2,6-dioxo-6-phenylhexa-3-enoate + H2O = 2-oxopent-4-enoate + benzoate + H(+). It participates in xenobiotic degradation; biphenyl degradation; 2-hydroxy-2,4-pentadienoate and benzoate from biphenyl: step 4/4. Its function is as follows. Catalyzes an unusual C-C bond hydrolysis of 2-hydroxy-6-oxo-6-phenylhexa-2,4-dienoic acid (HOPDA) to produce benzoic acid and 2-hydroxy-2,4-pentadienoic acid (HPD). In Pseudomonas putida (Arthrobacter siderocapsulatus), this protein is 2-hydroxy-6-oxo-6-phenylhexa-2,4-dienoate hydrolase (bphD).